A 78-amino-acid chain; its full sequence is Acyl carrier protein (78 aa).

The region spanning 4-78 is the Carrier domain; that stretch reads AEIRDKVYDI…QQAIDYIVKK (75 aa). An O-(pantetheine 4'-phosphoryl)serine modification is found at Ser39.

Belongs to the acyl carrier protein (ACP) family. In terms of processing, 4'-phosphopantetheine is transferred from CoA to a specific serine of apo-ACP by AcpS. This modification is essential for activity because fatty acids are bound in thioester linkage to the sulfhydryl of the prosthetic group.

It is found in the cytoplasm. Its pathway is lipid metabolism; fatty acid biosynthesis. Its function is as follows. Carrier of the growing fatty acid chain in fatty acid biosynthesis. In Chlorobium luteolum (strain DSM 273 / BCRC 81028 / 2530) (Pelodictyon luteolum), this protein is Acyl carrier protein.